Consider the following 143-residue polypeptide: Transcriptional regulator MraZ (143 aa).

2 consecutive SpoVT-AbrB domains span residues 5 to 47 and 76 to 119; these read EYEH…TLEE and AVEV…DRET.

This sequence belongs to the MraZ family. Forms oligomers.

The protein localises to the cytoplasm. Its subcellular location is the nucleoid. The chain is Transcriptional regulator MraZ from Staphylococcus saprophyticus subsp. saprophyticus (strain ATCC 15305 / DSM 20229 / NCIMB 8711 / NCTC 7292 / S-41).